The following is a 575-amino-acid chain: Reverse gyrse subunit B (575 aa).

An RG N-terminal-type; degenerate zinc finger spans residues Met-1 to Glu-39. ATP is bound by residues Gln-83 and Ala-100–Thr-107. Residues Phe-87–Glu-247 enclose the Helicase ATP-binding domain. The DEAD box motif lies at Asp-204–Asp-207. In terms of domain architecture, Helicase C-terminal spans Gln-316–Glu-465.

This sequence belongs to the DEAD box helicase family. DDVD subfamily. Heterodimer of an RgyA and RgyB subunit.

The protein localises to the cytoplasm. The enzyme catalyses ATP + H2O = ADP + phosphate + H(+). Modifies the topological state of DNA by introducing positive supercoils in an ATP-dependent process. Binds to single-stranded DNA, transiently cleaves and then rejoins the end, introducing a positive supercoil in the process. The scissile phosphodiester is attacked by the catalytic tyrosine of the enzyme, resulting in the formation of a DNA-(5'-phosphotyrosyl)-enzyme intermediate. Probably involved in rewinding DNA strands in regions of the chromosome that have opened up to allow replication, transcription, DNA repair or for DNA protection. Reconstituted holoenzyme binds dsDNA a bit better than ssDNA, this subunit preferentially binds dsDNA. In isolation this subunit has DNA-stimulated ATPase activity that is stimulated by topoisomerase-domain containing RgyA. This subunit inhibits the relaxation activity of the topoisomerase subunit while promoting positive supercoiling. This chain is Reverse gyrse subunit B, found in Nanoarchaeum equitans (strain Kin4-M).